A 212-amino-acid polypeptide reads, in one-letter code: Thiamine-phosphate synthase (212 aa).

4-amino-2-methyl-5-(diphosphooxymethyl)pyrimidine contacts are provided by residues glutamine 40–lysine 44 and asparagine 75. Residues aspartate 76 and aspartate 95 each coordinate Mg(2+). Serine 113 lines the 4-amino-2-methyl-5-(diphosphooxymethyl)pyrimidine pocket. Residue threonine 139–serine 141 coordinates 2-[(2R,5Z)-2-carboxy-4-methylthiazol-5(2H)-ylidene]ethyl phosphate. Lysine 142 serves as a coordination point for 4-amino-2-methyl-5-(diphosphooxymethyl)pyrimidine. 2-[(2R,5Z)-2-carboxy-4-methylthiazol-5(2H)-ylidene]ethyl phosphate contacts are provided by residues glycine 171 and isoleucine 191–serine 192.

The protein belongs to the thiamine-phosphate synthase family. Requires Mg(2+) as cofactor.

The enzyme catalyses 2-[(2R,5Z)-2-carboxy-4-methylthiazol-5(2H)-ylidene]ethyl phosphate + 4-amino-2-methyl-5-(diphosphooxymethyl)pyrimidine + 2 H(+) = thiamine phosphate + CO2 + diphosphate. It carries out the reaction 2-(2-carboxy-4-methylthiazol-5-yl)ethyl phosphate + 4-amino-2-methyl-5-(diphosphooxymethyl)pyrimidine + 2 H(+) = thiamine phosphate + CO2 + diphosphate. It catalyses the reaction 4-methyl-5-(2-phosphooxyethyl)-thiazole + 4-amino-2-methyl-5-(diphosphooxymethyl)pyrimidine + H(+) = thiamine phosphate + diphosphate. It participates in cofactor biosynthesis; thiamine diphosphate biosynthesis; thiamine phosphate from 4-amino-2-methyl-5-diphosphomethylpyrimidine and 4-methyl-5-(2-phosphoethyl)-thiazole: step 1/1. Condenses 4-methyl-5-(beta-hydroxyethyl)thiazole monophosphate (THZ-P) and 2-methyl-4-amino-5-hydroxymethyl pyrimidine pyrophosphate (HMP-PP) to form thiamine monophosphate (TMP). The polypeptide is Thiamine-phosphate synthase (Staphylococcus epidermidis (strain ATCC 35984 / DSM 28319 / BCRC 17069 / CCUG 31568 / BM 3577 / RP62A)).